We begin with the raw amino-acid sequence, 150 residues long: Large ribosomal subunit protein uL15 (150 aa).

The disordered stretch occupies residues Met-1–Gly-55. A compositionally biased stretch (basic and acidic residues) spans Gln-8–Lys-32.

This sequence belongs to the universal ribosomal protein uL15 family. In terms of assembly, part of the 50S ribosomal subunit.

Its function is as follows. Binds to the 23S rRNA. This is Large ribosomal subunit protein uL15 from Bifidobacterium longum (strain DJO10A).